Reading from the N-terminus, the 327-residue chain is Annexin A8 (327 aa).

Annexin repeat units follow at residues 21–92 (FNPD…ALMY), 93–164 (PPYS…CLLQ), 177–249 (GLVL…TVVK), and 253–324 (NVHS…NLVG). The Ca(2+) site is built by Met-266, Gly-268, Gly-270, and Asp-310.

This sequence belongs to the annexin family.

In terms of biological role, this protein is an anticoagulant protein that acts as an indirect inhibitor of the thromboplastin-specific complex, which is involved in the blood coagulation cascade. In Mus musculus (Mouse), this protein is Annexin A8 (Anxa8).